Here is a 322-residue protein sequence, read N- to C-terminus: Atrochrysone carboxyl ACP thioesterase nsrC (322 aa).

4 residues coordinate Zn(2+): H105, H107, D109, and H110. D109 acts as the Proton donor/acceptor in catalysis.

It belongs to the metallo-beta-lactamase superfamily. It depends on Zn(2+) as a cofactor.

It carries out the reaction atrochrysone carboxyl-[ACP] + H2O = atrochrysone carboxylate + holo-[ACP] + H(+). Its pathway is secondary metabolite biosynthesis. Its function is as follows. Atrochrysone carboxyl ACP thioesterase; part of the gene cluster that mediates the biosynthesis of the tetrahydroxanthone dimer neosartorin, which exhibits antibacterial activity. The two different monomeric units appear to be synthesized by the same set of enzymes, among which the Baeyer-Villiger monooxygenase nsrF is the key enzyme for the divergence of the biosynthetic routes. The pathway begins with the synthesis of atrochrysone thioester by the polyketide synthase nsrB. The atrochrysone carboxyl ACP thioesterase nsrC then breaks the thioester bond and releases the atrochrysone carboxylic acid from AacuL. Atrochrysone carboxylic acid is decarboxylated by the decarboxylase nsrE, and oxidized by the anthrone oxygenase nsrD to yield emodin. Emodin is then reduced to emodin hydroquinone by the oxidoreductase nsrR. A-ring reduction by the short chain dehydrogenase nsrJ, dehydration by the scytalone dehydratase-like protein nsrI and probable spontaneous re-oxidation, results in overall deoxygenation to chrysophanol. The Baeyer-Villiger monooxygenase nsrF accepts chrysophanol as a substrate to insert one oxygen atom at two different positions to yield the precursors of both monomric units. NsrF is promiscuous/flexible in interacting with the 2 (non methylated and methylated) aromatic rings of chrysophanol, thus diverging the biosynthetic pathway at this point. After the hydrolysis of the lactones, methylesterification by the methyltransferase nsrG yields respectively moniliphenone and 2,2',6'-trihydroxy-4-methyl-6-methoxya-cyldiphenylmethanone. The next steps are the hydroxylation by the FAD-dependent monooxygenase nsrK, followed by isomerization by the monooxygenase nsrQ. The short chain dehydrogenase/reductase nsrO then catalyzes the C-5 ketoreduction to give the xanthone skeleton of blennolide C and 5-acetylblennolide A. The acetyltransferase nsrL has a strict substrate specificity and uses only blennolide A but not blennolide C to yield 5-acetylblennolide A as the single-acetylated product. In the final step of the biosynthesis, the heterodimerization of the 2 xanthones, blennolide C and 5-acetylblennolide A, is catalyzed by the cytochrome P450 monooxygenase nsrP. NsrP can utilize at least three different xanthones as its substrates to perform the dimerization reaction. The protein is Atrochrysone carboxyl ACP thioesterase nsrC of Aspergillus novofumigatus (strain IBT 16806).